Consider the following 192-residue polypeptide: Small ribosomal subunit protein bS16 (192 aa).

Positions 149 to 161 (EKKAAEAKAKAEA) are enriched in basic and acidic residues. A disordered region spans residues 149-192 (EKKAAEAKAKAEAEAAAAAEEATETEETPMEAAAEEAPAAESAE). Over residues 178 to 192 (MEAAAEEAPAAESAE) the composition is skewed to low complexity.

Belongs to the bacterial ribosomal protein bS16 family.

The polypeptide is Small ribosomal subunit protein bS16 (Porphyromonas gingivalis (strain ATCC 33277 / DSM 20709 / CIP 103683 / JCM 12257 / NCTC 11834 / 2561)).